The sequence spans 105 residues: Cell division protein FtsB (105 aa).

Topologically, residues 1–3 are cytoplasmic; it reads MRI. The chain crosses the membrane as a helical span at residues 4–21; sequence VIYSMLVLLIAIQYPLWL. The Periplasmic segment spans residues 22 to 105; the sequence is GKGGWLKVYE…DTAKASTVKQ (84 aa). Positions 32 to 60 form a coiled coil; it reads MEKQVELQEAKNSLLALRNAKLEGDVKDL.

It belongs to the FtsB family. As to quaternary structure, part of a complex composed of FtsB, FtsL and FtsQ.

The protein resides in the cell inner membrane. In terms of biological role, essential cell division protein. May link together the upstream cell division proteins, which are predominantly cytoplasmic, with the downstream cell division proteins, which are predominantly periplasmic. This Polynucleobacter asymbioticus (strain DSM 18221 / CIP 109841 / QLW-P1DMWA-1) (Polynucleobacter necessarius subsp. asymbioticus) protein is Cell division protein FtsB.